Here is a 537-residue protein sequence, read N- to C-terminus: Cytochrome P450 monooxygenase AOL_s00215g282 (537 aa).

The chain crosses the membrane as a helical span at residues 9–29; that stretch reads ATVVLCGSIVTVSIAYVIFVV. A glycan (N-linked (GlcNAc...) asparagine) is linked at Asn126. Cys451 contributes to the heme binding site.

The protein belongs to the cytochrome P450 family. Heme serves as cofactor.

It is found in the membrane. The protein operates within secondary metabolite biosynthesis; terpenoid biosynthesis. Functionally, cytochrome P450 monooxygenase; part of the gene cluster that mediates the biosynthesis of sesquiterpenyl epoxy-cyclohexenoids (SECs) such as anthrobotrisins and arthrosporols, metabolites that possess a novel hybrid carbon skeleton consisting of a polyketide-derived epoxycyclohexenol combined with a terpenoid-derived monocyclic sesquiterpenol substructure (PKS-PTS hybrid). The SEC pathway plays an important role for fungal soil colonization via decreasing fungal nematode-capturing ability. Within the pathway, the cytochrome P450 monooxygenase AOL_s00215g282 acts as a m-cresol hydrolase that converts m-cresol to toluquinol. The pathway begins with the biosynthesis of 6-methylsalicylic acid (6-MSA), the first precursor of the polyketide-derived epoxycyclohexenol in arthrosporols, by the polyketide synthase (PKS) AOL_s00215g283 via condensation of 1 acetate and 3 malonate units. The 6-methylsalicylic acid decarboxylase AOL_s00215g281 then catalyzes the decarboxylation of 6-methylsalicylic acid to yield m-cresol. The cytochrome P450 monooxygenase AOL_s00215g282 further oxidizes m-cresol to yield toluquinol. With the assistance of the oxidoreductase AOL_s00215g277, the polyprenyl transferase AOL_s00215g276 catalyzes the farnesylation of toluquinol to produce farnesyl hydroquinone, the hybrid precursor for biosynthesis of SECs. Farnesyl hydroquinone undergoes epoxidation and then subsequent dehydrogenation to form farnesyl epoxy-quinone, the first and simplest SEC. The cytochrome P450 monooxygenase AOL_s00215g278 and the FAD-dependent monooxygenase AOL_s00215g279 might be involved in the oxygenation of the phenol moiety, most likely in the epoxy formation. The cytochrome P450 monooxygenases AOL_s00215g274 and AOL_s00215g280 are involved in specific regional ketone reductions at respectively C-4 and C-1 of farnesyl epoxy-quinone PubMed:33823587. This chain is Cytochrome P450 monooxygenase AOL_s00215g282, found in Arthrobotrys oligospora (strain ATCC 24927 / CBS 115.81 / DSM 1491) (Nematode-trapping fungus).